Consider the following 153-residue polypeptide: Deoxyuridine 5'-triphosphate nucleotidohydrolase (153 aa).

Substrate contacts are provided by residues 71 to 73, Asn-84, 88 to 90, and Met-98; these read RSG and LID.

The protein belongs to the dUTPase family. Mg(2+) serves as cofactor.

It carries out the reaction dUTP + H2O = dUMP + diphosphate + H(+). The protein operates within pyrimidine metabolism; dUMP biosynthesis; dUMP from dCTP (dUTP route): step 2/2. Functionally, this enzyme is involved in nucleotide metabolism: it produces dUMP, the immediate precursor of thymidine nucleotides and it decreases the intracellular concentration of dUTP so that uracil cannot be incorporated into DNA. The polypeptide is Deoxyuridine 5'-triphosphate nucleotidohydrolase (Wigglesworthia glossinidia brevipalpis).